Reading from the N-terminus, the 341-residue chain is Anthranilate phosphoribosyltransferase (341 aa).

5-phospho-alpha-D-ribose 1-diphosphate is bound by residues Gly84, 87–88 (GD), Thr92, 94–97 (NIST), 112–120 (KHGNRSVSS), and Ser124. Position 84 (Gly84) interacts with anthranilate. Position 96 (Ser96) interacts with Mg(2+). Asn115 contributes to the anthranilate binding site. Arg170 is a binding site for anthranilate. 2 residues coordinate Mg(2+): Asp229 and Glu230.

The protein belongs to the anthranilate phosphoribosyltransferase family. As to quaternary structure, homodimer. Mg(2+) is required as a cofactor.

The enzyme catalyses N-(5-phospho-beta-D-ribosyl)anthranilate + diphosphate = 5-phospho-alpha-D-ribose 1-diphosphate + anthranilate. It functions in the pathway amino-acid biosynthesis; L-tryptophan biosynthesis; L-tryptophan from chorismate: step 2/5. Catalyzes the transfer of the phosphoribosyl group of 5-phosphorylribose-1-pyrophosphate (PRPP) to anthranilate to yield N-(5'-phosphoribosyl)-anthranilate (PRA). The polypeptide is Anthranilate phosphoribosyltransferase (Polynucleobacter asymbioticus (strain DSM 18221 / CIP 109841 / QLW-P1DMWA-1) (Polynucleobacter necessarius subsp. asymbioticus)).